Consider the following 444-residue polypeptide: MSQSYINVIGAGLAGSEAAYQIAERGIPVKLYEMRGVKSTPQHKTDNFAELVCSNSLRGDALTNAVGLLKEEMRRLGSVILESAEATRVPAGGALAVDRDGFSQMVTEKVVNHPLIEVVRDEITELPTDVITVVATGPLTSDALAEKIHALNNGDGFYFYDAAAPIIDVNTIDMSKVYLKSRYDKGEAAYLNAPMTKQEFMDFHEALVNAEEAPLNSFEKEKYFEGCMPIEVMAKRGIKTMLYGPMKPVGLEYPDDYTGPRDGEFKTPYAVVQLRQDNAAGSLYNIVGFQTHLKWGEQKRVFQMIPGLENAEFVRYGVMHRNSYMDSPNLLEQTYRSKKQPNLFFAGQMTGVEGYVESAASGLVAGINAARLFKEESEVIFPETTAIGSLAHYITHADSKHFQPMNVNFGIIKELEGERIRDKKARYEKIAERALADLEEFLTV.

An FAD-binding site is contributed by 10 to 15; it reads GAGLAG.

It belongs to the MnmG family. TrmFO subfamily. FAD is required as a cofactor.

It localises to the cytoplasm. The catalysed reaction is uridine(54) in tRNA + (6R)-5,10-methylene-5,6,7,8-tetrahydrofolate + NADH + H(+) = 5-methyluridine(54) in tRNA + (6S)-5,6,7,8-tetrahydrofolate + NAD(+). It carries out the reaction uridine(54) in tRNA + (6R)-5,10-methylene-5,6,7,8-tetrahydrofolate + NADPH + H(+) = 5-methyluridine(54) in tRNA + (6S)-5,6,7,8-tetrahydrofolate + NADP(+). Its function is as follows. Catalyzes the folate-dependent formation of 5-methyl-uridine at position 54 (M-5-U54) in all tRNAs. This is Methylenetetrahydrofolate--tRNA-(uracil-5-)-methyltransferase TrmFO from Streptococcus pneumoniae (strain ATCC 700669 / Spain 23F-1).